We begin with the raw amino-acid sequence, 207 residues long: LexA repressor (207 aa).

Positions Val-28–Ser-48 form a DNA-binding region, H-T-H motif. Active-site for autocatalytic cleavage activity residues include Ser-130 and Lys-168.

Belongs to the peptidase S24 family. As to quaternary structure, homodimer.

It catalyses the reaction Hydrolysis of Ala-|-Gly bond in repressor LexA.. Functionally, represses a number of genes involved in the response to DNA damage (SOS response), including recA and lexA. In the presence of single-stranded DNA, RecA interacts with LexA causing an autocatalytic cleavage which disrupts the DNA-binding part of LexA, leading to derepression of the SOS regulon and eventually DNA repair. This is LexA repressor from Staphylococcus carnosus (strain TM300).